A 149-amino-acid chain; its full sequence is Transcriptional repressor NrdR (149 aa).

The segment at 3–34 (CPFCSAVDTKVIDSRLVGEGSSVRRRRQCLVC) is a zinc-finger region. The region spanning 49-139 (PRVVKSNDVR…VYRSFEDIKE (91 aa)) is the ATP-cone domain.

The protein belongs to the NrdR family. Zn(2+) serves as cofactor.

Its function is as follows. Negatively regulates transcription of bacterial ribonucleotide reductase nrd genes and operons by binding to NrdR-boxes. The polypeptide is Transcriptional repressor NrdR (Enterobacter sp. (strain 638)).